We begin with the raw amino-acid sequence, 137 residues long: Basic phospholipase A2 3 (137 aa).

The signal sequence occupies residues 1–11 (LVAVCVSLLGA). Positions 12–19 (ANIPPQPL) are excised as a propeptide. Disulfide bonds link Cys30-Cys89, Cys44-Cys136, Cys46-Cys62, Cys61-Cys117, Cys68-Cys110, Cys78-Cys103, and Cys96-Cys108. Positions 45, 47, and 49 each coordinate Ca(2+). His65 is an active-site residue. Asp66 is a Ca(2+) binding site. Asp111 is a catalytic residue.

This sequence belongs to the phospholipase A2 family. Group I subfamily. D49 sub-subfamily. Monomer, or homotrimer. Was firstly described as a trimer, but has been reinterpreted with the possibility of being a monomer. Ca(2+) is required as a cofactor. As to expression, expressed by the venom gland.

The protein resides in the secreted. The catalysed reaction is a 1,2-diacyl-sn-glycero-3-phosphocholine + H2O = a 1-acyl-sn-glycero-3-phosphocholine + a fatty acid + H(+). Snake venom phospholipase A2 (PLA2) that shows anticoagulant and neurotoxic activities. PLA2 catalyzes the calcium-dependent hydrolysis of the 2-acyl groups in 3-sn-phosphoglycerides. This chain is Basic phospholipase A2 3, found in Bungarus caeruleus (Indian krait).